A 369-amino-acid polypeptide reads, in one-letter code: Uroporphyrinogen decarboxylase (369 aa).

The tract at residues 1 to 26 (MPVLHVDARPGSGPGGVSPPPSGAAL) is disordered. Residues 56–60 (RQAGR), aspartate 105, tyrosine 180, serine 235, and histidine 348 contribute to the substrate site.

It belongs to the uroporphyrinogen decarboxylase family. Homodimer.

The protein resides in the cytoplasm. The enzyme catalyses uroporphyrinogen III + 4 H(+) = coproporphyrinogen III + 4 CO2. It functions in the pathway porphyrin-containing compound metabolism; protoporphyrin-IX biosynthesis; coproporphyrinogen-III from 5-aminolevulinate: step 4/4. Functionally, catalyzes the decarboxylation of four acetate groups of uroporphyrinogen-III to yield coproporphyrinogen-III. This Frankia casuarinae (strain DSM 45818 / CECT 9043 / HFP020203 / CcI3) protein is Uroporphyrinogen decarboxylase.